Consider the following 138-residue polypeptide: Small ribosomal subunit protein uS9c (138 aa).

It belongs to the universal ribosomal protein uS9 family.

Its subcellular location is the plastid. The protein localises to the chloroplast. This is Small ribosomal subunit protein uS9c (rps9) from Phaeodactylum tricornutum (strain CCAP 1055/1).